Consider the following 170-residue polypeptide: Photosystem II extrinsic protein V (170 aa).

A signal peptide spans 1-33; it reads MASLFSTLQRSLKGLLILVPVLIGLVLASPAEA. Cys70, Cys73, His74, and Met137 together coordinate heme c.

This sequence belongs to the cytochrome c family. PsbV subfamily. In terms of assembly, PSII is composed of 1 copy each of membrane proteins PsbA, PsbB, PsbC, PsbD, PsbE, PsbF, PsbH, PsbI, PsbJ, PsbK, PsbL, PsbM, PsbT, PsbX, PsbY, PsbZ, Psb30/Ycf12, peripheral proteins PsbO, CyanoQ (PsbQ), PsbU, PsbV and a large number of cofactors. It forms dimeric complexes. Heme c is required as a cofactor.

It localises to the cellular thylakoid membrane. In terms of biological role, one of the extrinsic, lumenal subunits of photosystem II (PSII). PSII is a light-driven water plastoquinone oxidoreductase, using light energy to abstract electrons from H(2)O, generating a proton gradient subsequently used for ATP formation. The extrinsic proteins stabilize the structure of photosystem II oxygen-evolving complex (OEC), the ion environment of oxygen evolution and protect the OEC against heat-induced inactivation. Low-potential cytochrome c that plays a role in the OEC of PSII. The sequence is that of Photosystem II extrinsic protein V from Parasynechococcus marenigrum (strain WH8102).